The primary structure comprises 307 residues: Glycerol-3-phosphate dehydrogenase [NAD(P)+] (307 aa).

NADPH-binding residues include phenylalanine 11, arginine 31, and lysine 95. Sn-glycerol 3-phosphate is bound by residues lysine 95, glycine 121, and serine 123. Alanine 125 provides a ligand contact to NADPH. Sn-glycerol 3-phosphate contacts are provided by lysine 176, aspartate 229, serine 239, arginine 240, and asparagine 241. The active-site Proton acceptor is the lysine 176. Arginine 240 provides a ligand contact to NADPH. Glutamate 261 is a binding site for NADPH.

This sequence belongs to the NAD-dependent glycerol-3-phosphate dehydrogenase family.

The protein localises to the cytoplasm. The catalysed reaction is sn-glycerol 3-phosphate + NAD(+) = dihydroxyacetone phosphate + NADH + H(+). The enzyme catalyses sn-glycerol 3-phosphate + NADP(+) = dihydroxyacetone phosphate + NADPH + H(+). Its pathway is membrane lipid metabolism; glycerophospholipid metabolism. Functionally, catalyzes the reduction of the glycolytic intermediate dihydroxyacetone phosphate (DHAP) to sn-glycerol 3-phosphate (G3P), the key precursor for phospholipid synthesis. In Jannaschia sp. (strain CCS1), this protein is Glycerol-3-phosphate dehydrogenase [NAD(P)+].